The chain runs to 322 residues: uncharacterized protein (322 aa).

A helical transmembrane segment spans residues valine 212 to valine 234.

The protein localises to the membrane. This is an uncharacterized protein from Rickettsia prowazekii (strain Madrid E).